The following is a 159-amino-acid chain: ATP synthase subunit b' (159 aa).

The helical transmembrane segment at 27-47 (ATLPLMAVQFLILTVILNALL) threads the bilayer.

It belongs to the ATPase B chain family. As to quaternary structure, F-type ATPases have 2 components, F(1) - the catalytic core - and F(0) - the membrane proton channel. F(1) has five subunits: alpha(3), beta(3), gamma(1), delta(1), epsilon(1). F(0) has four main subunits: a(1), b(1), b'(1) and c(10-14). The alpha and beta chains form an alternating ring which encloses part of the gamma chain. F(1) is attached to F(0) by a central stalk formed by the gamma and epsilon chains, while a peripheral stalk is formed by the delta, b and b' chains.

It is found in the cellular thylakoid membrane. F(1)F(0) ATP synthase produces ATP from ADP in the presence of a proton or sodium gradient. F-type ATPases consist of two structural domains, F(1) containing the extramembraneous catalytic core and F(0) containing the membrane proton channel, linked together by a central stalk and a peripheral stalk. During catalysis, ATP synthesis in the catalytic domain of F(1) is coupled via a rotary mechanism of the central stalk subunits to proton translocation. In terms of biological role, component of the F(0) channel, it forms part of the peripheral stalk, linking F(1) to F(0). The b'-subunit is a diverged and duplicated form of b found in plants and photosynthetic bacteria. The chain is ATP synthase subunit b' from Synechococcus sp. (strain PCC 6716).